Consider the following 306-residue polypeptide: Ornithine carbamoyltransferase (306 aa).

Residues serine 46–threonine 49, glutamine 73, arginine 97, and histidine 124–glutamine 127 each bind carbamoyl phosphate. L-ornithine-binding positions include asparagine 156, aspartate 220, and serine 224–methionine 225. Residues cysteine 260–leucine 261 and arginine 288 contribute to the carbamoyl phosphate site.

It belongs to the aspartate/ornithine carbamoyltransferase superfamily. OTCase family.

The protein resides in the cytoplasm. It catalyses the reaction carbamoyl phosphate + L-ornithine = L-citrulline + phosphate + H(+). The protein operates within amino-acid biosynthesis; L-arginine biosynthesis; L-arginine from L-ornithine and carbamoyl phosphate: step 1/3. Its function is as follows. Reversibly catalyzes the transfer of the carbamoyl group from carbamoyl phosphate (CP) to the N(epsilon) atom of ornithine (ORN) to produce L-citrulline. This Campylobacter jejuni subsp. jejuni serotype O:23/36 (strain 81-176) protein is Ornithine carbamoyltransferase.